The primary structure comprises 651 residues: Peptide-N(4)-(N-acetyl-beta-glucosaminyl)asparagine amidase (651 aa).

At alanine 2 the chain carries N-acetylalanine. The PUB domain maps to glutamate 30–lysine 91. Cysteine 247, cysteine 250, cysteine 280, and cysteine 283 together coordinate Zn(2+). Cysteine 306 serves as the catalytic Nucleophile. Residues histidine 333 and aspartate 350 contribute to the active site. In terms of domain architecture, PAW spans glutamate 451 to leucine 651.

The protein belongs to the transglutaminase-like superfamily. PNGase family. As to quaternary structure, component of a complex required to couple retrotranslocation, ubiquitination and deglycosylation composed of NGLY1, SAKS1, AMFR, VCP and RAD23B. Interacts with the proteasome components RAD23B and PSMC1. Interacts with directly with VCP. Interacts with DERL1, bringing it close to the endoplasmic reticulum membrane. Interacts with SAKS1. The cofactor is Zn(2+). As to expression, ubiquitously expressed with highest level in testis.

The protein localises to the cytoplasm. The catalysed reaction is Hydrolysis of an N(4)-(acetyl-beta-D-glucosaminyl)asparagine residue in which the glucosamine residue may be further glycosylated, to yield a (substituted) N-acetyl-beta-D-glucosaminylamine and a peptide containing an aspartate residue.. Inhibited by Z-VAD-fmk, a well-known caspase inhibitor, which inhibits enzyme activity through covalent binding of the carbohydrate to the single Cys-306 residue. Functionally, specifically deglycosylates the denatured form of N-linked glycoproteins in the cytoplasm and assists their proteasome-mediated degradation. Cleaves the beta-aspartyl-glucosamine (GlcNAc) of the glycan and the amide side chain of Asn, converting Asn to Asp. Prefers proteins containing high-mannose over those bearing complex type oligosaccharides. Can recognize misfolded proteins in the endoplasmic reticulum that are exported to the cytosol to be destroyed and deglycosylate them, while it has no activity toward native proteins. Deglycosylation is a prerequisite for subsequent proteasome-mediated degradation of some, but not all, misfolded glycoproteins. The polypeptide is Peptide-N(4)-(N-acetyl-beta-glucosaminyl)asparagine amidase (Ngly1) (Mus musculus (Mouse)).